The sequence spans 81 residues: Trefoil factor 3 (81 aa).

The first 22 residues, 1–22 (METRAFWTTLLLVLVAGSSCKA), serve as a signal peptide directing secretion. The P-type domain maps to 31-74 (SQCMVPANVRVDCGYPTVTSEQCNNRGCCFDSSIPNVPWCFKPL). 3 cysteine pairs are disulfide-bonded: Cys-33–Cys-59, Cys-43–Cys-58, and Cys-53–Cys-70.

As to quaternary structure, monomer. Homodimer; disulfide-linked. Expressed in goblet cells of the intestines, and colon, in paraventricular hypothalamus and supraoptic nuclei. Weakly expressed in gastric epithelial cells (at protein level). Expressed by goblet cells of small and large intestinal epithelia, kidney and stomach. Expressed in the paraventricular hypothalamus, arcuate nucleus and amygdala of the brain. Weakly expressed in gastric epithelial cells.

It localises to the secreted. The protein resides in the extracellular space. It is found in the extracellular matrix. Its subcellular location is the cytoplasm. In terms of biological role, involved in the maintenance and repair of the intestinal mucosa. Promotes the mobility of epithelial cells in healing processes (motogen). The protein is Trefoil factor 3 (Tff3) of Rattus norvegicus (Rat).